A 334-amino-acid chain; its full sequence is Protein-methionine-sulfoxide reductase catalytic subunit MsrP (334 aa).

Residues Met1–Ala44 constitute a signal peptide (tat-type signal). Mo-molybdopterin contacts are provided by residues Asn88, Tyr91–Glu92, Cys146, Thr181, Asn233, Arg238, and Gly249–Lys251.

It belongs to the MsrP family. As to quaternary structure, heterodimer of a catalytic subunit (MsrP) and a heme-binding subunit (MsrQ). The cofactor is Mo-molybdopterin. Post-translationally, predicted to be exported by the Tat system. The position of the signal peptide cleavage has not been experimentally proven.

It is found in the periplasm. It catalyses the reaction L-methionyl-[protein] + a quinone + H2O = L-methionyl-(S)-S-oxide-[protein] + a quinol. The enzyme catalyses L-methionyl-[protein] + a quinone + H2O = L-methionyl-(R)-S-oxide-[protein] + a quinol. Part of the MsrPQ system that repairs oxidized periplasmic proteins containing methionine sulfoxide residues (Met-O), using respiratory chain electrons. Thus protects these proteins from oxidative-stress damage caused by reactive species of oxygen and chlorine generated by the host defense mechanisms. MsrPQ is essential for the maintenance of envelope integrity under bleach stress, rescuing a wide series of structurally unrelated periplasmic proteins from methionine oxidation, including the primary periplasmic chaperone SurA and the lipoprotein Pal. The catalytic subunit MsrP is non-stereospecific, being able to reduce both (R-) and (S-) diastereoisomers of methionine sulfoxide. This is Protein-methionine-sulfoxide reductase catalytic subunit MsrP from Escherichia coli O7:K1 (strain IAI39 / ExPEC).